A 125-amino-acid chain; its full sequence is Small ribosomal subunit protein uS12 (125 aa).

3-methylthioaspartic acid is present on D89. The tract at residues 104 to 125 (TAGVKDRSQSRSKYGAKASKQD) is disordered.

It belongs to the universal ribosomal protein uS12 family. In terms of assembly, part of the 30S ribosomal subunit. Contacts proteins S8 and S17. May interact with IF1 in the 30S initiation complex.

With S4 and S5 plays an important role in translational accuracy. Functionally, interacts with and stabilizes bases of the 16S rRNA that are involved in tRNA selection in the A site and with the mRNA backbone. Located at the interface of the 30S and 50S subunits, it traverses the body of the 30S subunit contacting proteins on the other side and probably holding the rRNA structure together. The combined cluster of proteins S8, S12 and S17 appears to hold together the shoulder and platform of the 30S subunit. The chain is Small ribosomal subunit protein uS12 from Prochlorococcus marinus (strain MIT 9303).